The following is a 1448-amino-acid chain: DNA-directed RNA polymerase subunit beta' (1448 aa).

Residues Cys66, Cys68, Cys81, and Cys84 each coordinate Zn(2+). Residues Asp474, Asp476, and Asp478 each coordinate Mg(2+). Zn(2+) is bound by residues Cys814, Cys888, Cys895, and Cys898. The interval 1408–1448 (LEELQAAIGGDGESPSGDGAAGDGAPSEEDVEQIEASGSEN) is disordered.

It belongs to the RNA polymerase beta' chain family. In terms of assembly, the RNAP catalytic core consists of 2 alpha, 1 beta, 1 beta' and 1 omega subunit. When a sigma factor is associated with the core the holoenzyme is formed, which can initiate transcription. Mg(2+) is required as a cofactor. It depends on Zn(2+) as a cofactor.

The catalysed reaction is RNA(n) + a ribonucleoside 5'-triphosphate = RNA(n+1) + diphosphate. Its function is as follows. DNA-dependent RNA polymerase catalyzes the transcription of DNA into RNA using the four ribonucleoside triphosphates as substrates. This Salinibacter ruber (strain DSM 13855 / M31) protein is DNA-directed RNA polymerase subunit beta'.